Consider the following 204-residue polypeptide: uncharacterized protein (204 aa).

The protein resides in the cytoplasm. It is found in the nucleus. This is an uncharacterized protein from Schizosaccharomyces pombe (strain 972 / ATCC 24843) (Fission yeast).